The sequence spans 176 residues: Protein MAL2 (176 aa).

The Cytoplasmic portion of the chain corresponds to 1 to 34 (MSAGGASVPPPPNPAVSFPVPRVTLPAGPDILRT). In terms of domain architecture, MARVEL spans 31–175 (ILRTYSGAFV…SLGLALRRWR (145 aa)). A helical transmembrane segment spans residues 35–55 (YSGAFVCLEILFGGLVWILVA). Topologically, residues 56–66 (SSNVPLPLLQG) are lumenal. The chain crosses the membrane as a helical span at residues 67–87 (WVMFVSVTAFFFSLLFLGLFL). Residues 88–102 (SGMVTQIDANWNFLD) are Cytoplasmic-facing. Residues 103–123 (FAYHFTVFVFYFGAFLLEAAA) form a helical membrane-spanning segment. The Lumenal portion of the chain corresponds to 124–149 (TSLHDLHYNITMTGQPLLNDNQYNIN). Asparagine 132 carries N-linked (GlcNAc...) asparagine glycosylation. The helical transmembrane segment at 150-170 (VAASIFAFMTTACYGCSLGLA) threads the bilayer. Residues 171–176 (LRRWRP) lie on the Cytoplasmic side of the membrane.

The protein belongs to the MAL family. In terms of assembly, interacts with TPD52L2.

It is found in the cell membrane. The protein resides in the apical cell membrane. In terms of biological role, member of the machinery of polarized transport. Required for the indirect transcytotic route at the step of the egress of the transcytosing cargo from perinuclear endosomes in order for it to travel to the apical surface via a raft-dependent pathway. This chain is Protein MAL2 (MAL2), found in Pongo abelii (Sumatran orangutan).